Reading from the N-terminus, the 41-residue chain is Competence-stimulating peptide type 2 (41 aa).

The propeptide occupies 1–24; it reads MKNTVKLEQFVALKEKDLQKIKGG.

The protein belongs to the ComC family.

Its subcellular location is the secreted. Acts as a pheromone, induces cells to develop competence for genetic transformation. The sequence is that of Competence-stimulating peptide type 2 (comC2) from Streptococcus pneumoniae serotype 4 (strain ATCC BAA-334 / TIGR4).